A 362-amino-acid polypeptide reads, in one-letter code: 3-isopropylmalate dehydrogenase (362 aa).

Position 76-87 (76-87 (GPKWGTGSVRPE)) interacts with NAD(+). Substrate is bound by residues Arg94, Arg104, Arg133, and Asp222. 3 residues coordinate Mg(2+): Asp222, Asp247, and Asp251. 286–297 (GSAPDLGPGKVN) contacts NAD(+).

It belongs to the isocitrate and isopropylmalate dehydrogenases family. Homodimer. It depends on Mg(2+) as a cofactor. Requires Mn(2+) as cofactor.

The protein resides in the cytoplasm. The enzyme catalyses (2R,3S)-3-isopropylmalate + NAD(+) = 4-methyl-2-oxopentanoate + CO2 + NADH. Its pathway is amino-acid biosynthesis; L-leucine biosynthesis; L-leucine from 3-methyl-2-oxobutanoate: step 3/4. Functionally, catalyzes the oxidation of 3-carboxy-2-hydroxy-4-methylpentanoate (3-isopropylmalate) to 3-carboxy-4-methyl-2-oxopentanoate. The product decarboxylates to 4-methyl-2 oxopentanoate. The protein is 3-isopropylmalate dehydrogenase (LEU2) of Pichia angusta (Yeast).